The primary structure comprises 457 residues: L-lysine-epsilon aminotransferase (457 aa).

Pyridoxal 5'-phosphate-binding residues include Gly131 and Ala132. Arg172 and Gln278 together coordinate 2-oxoglutarate. Arg172 is a binding site for L-lysine. Gln278 provides a ligand contact to pyridoxal 5'-phosphate. Position 304 is an N6-(pyridoxal phosphate)lysine (Lys304). Arg427 lines the 2-oxoglutarate pocket.

It belongs to the class-III pyridoxal-phosphate-dependent aminotransferase family. In terms of assembly, monomer. Requires pyridoxal 5'-phosphate as cofactor.

It catalyses the reaction L-lysine + 2-oxoglutarate = (S)-2-amino-6-oxohexanoate + L-glutamate. It functions in the pathway antibiotic biosynthesis; cephamycin C biosynthesis. Its activity is regulated as follows. Activity is induced in the presence of high concentrations of lysine, but not by L-alpha-aminoadipic acid. Not repressed by ammonium ions. Catalyzes the transfer of the terminal amino group of L-lysine to alpha-ketoglutarate to yield L-glutamate and 2-aminoadipate 6-semialdehyde ((S)-2-amino-6-oxohexanoate), which is spontaneously converted to the dehydrated form 1-piperideine 6-carboxylate. Shows a high specificity for L-lysine as substrate although L-ornithine can also be used, leading to the formation of an o-aminobenzaldehyde reactive compound. Only cis-oxaloacetate and pyruvate can replace alpha-ketoglutarate, but with very low efficiency. This Streptomyces clavuligerus protein is L-lysine-epsilon aminotransferase.